Reading from the N-terminus, the 131-residue chain is Large ribosomal subunit protein bL19 (131 aa).

The protein belongs to the bacterial ribosomal protein bL19 family.

In terms of biological role, this protein is located at the 30S-50S ribosomal subunit interface and may play a role in the structure and function of the aminoacyl-tRNA binding site. The sequence is that of Large ribosomal subunit protein bL19 from Anaeromyxobacter dehalogenans (strain 2CP-C).